Consider the following 721-residue polypeptide: Glucans biosynthesis glucosyltransferase H (721 aa).

Transmembrane regions (helical) follow at residues 53–75 (VLIM…QVLQ), 85–107 (VVLV…ALAG), 404–426 (GIGA…LISL), 456–478 (WVFA…LVLI), 490–512 (LRTF…VMMV), and 567–589 (WPLL…VALL).

Belongs to the glycosyltransferase 2 family. OpgH subfamily.

Its subcellular location is the cell inner membrane. The protein operates within glycan metabolism; osmoregulated periplasmic glucan (OPG) biosynthesis. Its function is as follows. Involved in the biosynthesis of osmoregulated periplasmic glucans (OPGs). This chain is Glucans biosynthesis glucosyltransferase H, found in Rhodopseudomonas palustris (strain ATCC BAA-98 / CGA009).